Consider the following 256-residue polypeptide: Thiazole synthase (256 aa).

Lys-96 acts as the Schiff-base intermediate with DXP in catalysis. 1-deoxy-D-xylulose 5-phosphate contacts are provided by residues Gly-157, 183 to 184 (AG), and 205 to 206 (NT).

It belongs to the ThiG family. As to quaternary structure, homotetramer. Forms heterodimers with either ThiH or ThiS.

Its subcellular location is the cytoplasm. It carries out the reaction [ThiS sulfur-carrier protein]-C-terminal-Gly-aminoethanethioate + 2-iminoacetate + 1-deoxy-D-xylulose 5-phosphate = [ThiS sulfur-carrier protein]-C-terminal Gly-Gly + 2-[(2R,5Z)-2-carboxy-4-methylthiazol-5(2H)-ylidene]ethyl phosphate + 2 H2O + H(+). It participates in cofactor biosynthesis; thiamine diphosphate biosynthesis. Catalyzes the rearrangement of 1-deoxy-D-xylulose 5-phosphate (DXP) to produce the thiazole phosphate moiety of thiamine. Sulfur is provided by the thiocarboxylate moiety of the carrier protein ThiS. In vitro, sulfur can be provided by H(2)S. The protein is Thiazole synthase of Bacillus cytotoxicus (strain DSM 22905 / CIP 110041 / 391-98 / NVH 391-98).